A 289-amino-acid chain; its full sequence is ATP synthase gamma chain (289 aa).

Belongs to the ATPase gamma chain family. In terms of assembly, F-type ATPases have 2 components, CF(1) - the catalytic core - and CF(0) - the membrane proton channel. CF(1) has five subunits: alpha(3), beta(3), gamma(1), delta(1), epsilon(1). CF(0) has three main subunits: a, b and c.

The protein localises to the cell inner membrane. Produces ATP from ADP in the presence of a proton gradient across the membrane. The gamma chain is believed to be important in regulating ATPase activity and the flow of protons through the CF(0) complex. This is ATP synthase gamma chain from Actinobacillus succinogenes (strain ATCC 55618 / DSM 22257 / CCUG 43843 / 130Z).